The sequence spans 521 residues: Maturase K (521 aa).

It belongs to the intron maturase 2 family. MatK subfamily.

Its subcellular location is the plastid. It is found in the chloroplast. Its function is as follows. Usually encoded in the trnK tRNA gene intron. Probably assists in splicing its own and other chloroplast group II introns. This chain is Maturase K, found in Trillium erectum (Beth root).